The following is a 265-amino-acid chain: NAD kinase (265 aa).

Residue D45 is the Proton acceptor of the active site. NAD(+) contacts are provided by residues 45–46 (DG), 122–123 (NE), R148, D150, 161–166 (TAYSKS), and A185.

The protein belongs to the NAD kinase family. The cofactor is a divalent metal cation.

The protein localises to the cytoplasm. It catalyses the reaction NAD(+) + ATP = ADP + NADP(+) + H(+). Its function is as follows. Involved in the regulation of the intracellular balance of NAD and NADP, and is a key enzyme in the biosynthesis of NADP. Catalyzes specifically the phosphorylation on 2'-hydroxyl of the adenosine moiety of NAD to yield NADP. This chain is NAD kinase, found in Lactobacillus delbrueckii subsp. bulgaricus (strain ATCC 11842 / DSM 20081 / BCRC 10696 / JCM 1002 / NBRC 13953 / NCIMB 11778 / NCTC 12712 / WDCM 00102 / Lb 14).